The following is a 237-amino-acid chain: Aliphatic sulfonates import ATP-binding protein SsuB 1 (237 aa).

The ABC transporter domain occupies 5–221 (LMDIRVEHKA…PRDRRDPLLA (217 aa)). 38–45 (GPSGCGKS) is a binding site for ATP.

Belongs to the ABC transporter superfamily. Aliphatic sulfonates importer (TC 3.A.1.17.2) family. The complex is composed of two ATP-binding proteins (SsuB), two transmembrane proteins (SsuC) and a solute-binding protein (SsuA).

The protein resides in the cell inner membrane. It carries out the reaction ATP + H2O + aliphatic sulfonate-[sulfonate-binding protein]Side 1 = ADP + phosphate + aliphatic sulfonateSide 2 + [sulfonate-binding protein]Side 1.. In terms of biological role, part of the ABC transporter complex SsuABC involved in aliphatic sulfonates import. Responsible for energy coupling to the transport system. This chain is Aliphatic sulfonates import ATP-binding protein SsuB 1, found in Pseudomonas syringae pv. syringae (strain B728a).